We begin with the raw amino-acid sequence, 527 residues long: MFMLLVFGALLPEVPLSGQDKAPPQADGISATPLFNYASLRLPEEHIPFFLHNNRHIATVCRKDSHCPYKKYLENLKYCWGYEKSCRPEFRFGYPVCTYVDMGWTDTLESAQEIFWKQADFGYAAERLEELHVLCQPKEKNDSSLVCSRYLQYCRATNIYLDLRNIKRNHDRFKEDFVQSGEIGGYCKLDIRSLMSQGQRKSPLQSWFAELQSYTELNFRPVEDAQCDIVIEKPTYFMKLDAGVNMYHHFCDFINLYITQHVNNSFSTDVYVVMWDTSSYGYGDLFSDTWKAFTDYDVIHLKTYDAKRVCFKEAIFSLLPRMRYGLFYNTPLISGCQNTGLFRAFSQHVLHRLNITQEGPKGGKIRVTILARSTEYRKILNQNELVNALKTVSTFEVQIVDYKYKELGFLDQLRITHNTDIFIGMHGAGLTHLLFLPDWAAVFELYNCGDERCYLDLARLRGVHYITWRRQNKVFPQDKGHHPTLGEHPKFTNYSFDVEEFMYLVLQAADYVLQHPKWPFKKKHDEL.

The signal sequence occupies residues 1 to 17; that stretch reads MFMLLVFGALLPEVPLS. The Required for optimal activity motif lies at 295 to 297; it reads DYD. N-linked (GlcNAc...) asparagine glycosylation is present at Asn354. The Prevents secretion from ER motif lies at 524 to 527; that stretch reads HDEL.

This sequence belongs to the glycosyltransferase 61 family.

It is found in the endoplasmic reticulum lumen. The catalysed reaction is L-seryl-[protein] + UDP-N-acetyl-alpha-D-glucosamine = 3-O-(N-acetyl-beta-D-glucosaminyl)-L-seryl-[protein] + UDP + H(+). It catalyses the reaction L-threonyl-[protein] + UDP-N-acetyl-alpha-D-glucosamine = 3-O-(N-acetyl-beta-D-glucosaminyl)-L-threonyl-[protein] + UDP + H(+). Its function is as follows. Catalyzes the transfer of a single N-acetylglucosamine from UDP-GlcNAc to a serine or threonine residue in extracellular proteins resulting in their modification with a beta-linked N-acetylglucosamine (O-GlcNAc). Specifically glycosylates the Thr residue located between the fifth and sixth conserved cysteines of folded EGF-like domains. This Bos taurus (Bovine) protein is EGF domain-specific O-linked N-acetylglucosamine transferase (EOGT).